Reading from the N-terminus, the 459-residue chain is ATP-dependent RNA helicase me31b (459 aa).

The segment at 1 to 267 is recA-like domain 1; sequence MMTEKLNSGH…EINLMEELTL (267 aa). Phosphoserine is present on residues serine 8 and serine 29. A Q motif motif is present at residues 58-86; sequence NEFEEFCLKRELLMGIFEKGWERPSPIQE. Positions 89-259 constitute a Helicase ATP-binding domain; sequence IPIALSGKDV…EKHLREPYEI (171 aa). 102 to 109 contributes to the ATP binding site; it reads AKNGTGKT. The short motif at 207-210 is the DEAD box element; sequence DEAD. The segment at 264-431 is gyf binding; it reads ELTLKGVTQY…PKVIDPALYV (168 aa). The Helicase C-terminal domain maps to 269 to 429; that stretch reads GVTQYYAFVQ…PIPKVIDPAL (161 aa). The recA-like domain 2 stretch occupies residues 432–459; it reads ANVGASVGDTCNNSDLNNSANEEGNVSK. Residue serine 450 is modified to Phosphoserine.

The protein belongs to the DEAD box helicase family. DDX6/DHH1 subfamily. In terms of assembly, conserved component of different types of multiprotein ribonucleoprotein complexes (RNPs) that form distinct germ granules (P-body, nuage, sponge body or polar granules) and P-body-like neuronal RNPs. Consequently it interacts with a wide variety of proteins, some of which appear to be common interactive partners in almost all RNPs types i.e. cup and tral, whereas other interactions are specific to a germ granule/RNP. Core functional components in me31B-containing RNPs include RNA regulatory proteins (such as translational repressor, RNA-decapping and exonuclease proteins), RNA localization proteins and additional proteins depending on the biological context of the RNPs. In the P-body RNPs, interacts with at least the translation repressor proteins tral, cup and Edc3, and the mRNA localization factor yps. Interaction with tral or Edc3 is required for translation repression and possibly RNA decapping; binding to tral and Edc3 is mutually exclusive. In the nuage and germ plasm polar granule RNPs, interacts with at least tral, cup, and additional proteins required for assembly and function of the germ granules such as tud, vas and aub. Interacts (when dimethylated on Arg residues) with tud; interaction is RNA-independent. Component of the osk RNP complex, which is composed of at least me31B, exu, yps, aret/bruno, cup, and the mRNA of osk. Component of the nanos RNP complex, which is composed of at least smg, cup, tral, me31B, the CCR4-NOT complex members Rga/NOT2 and Caf1-55, and the mRNA of nanos (nos). Interacts with tral and piRNA pathway components papi and AGO3; promotes interaction between nuage RNPs and the piRNA-mediated transposon silencing. Forms a RNP containing at least me31B, eIF4E1, cup, tral and pAbp; this interaction is required for the translational silencing of maternal mRNAs during the maternal-to-zygotic transition. In the sponge body, forms a RNP containing at least me31B, exu, yps and the mRNA of osk; interactions with exu and yps are RNA dependent. Component of a neuronal RNP, at least composed of me31B, tral and Fmr1. Component of the Atx2-Not1 repressor complex, composed of at least me31B, Atx2, tyf and pAbp. Interacts (via the C-terminus) with Atx2, tyf, pAbp and Lsm12a. Interacts (via RecA-like domain 2) with 4EHP-GYF2 complex member Gyf (via the me31B binding motif). Interacts with 4E-T, Edc3 and Patr-1. In terms of processing, symmetrically dimethylated on arginine residues. In terms of tissue distribution, ubiquitously expressed throughout the brain (at protein level). Expressed in the olfactory system including the antennal lobes, projection neurons, local interneurons, mushroom-body Kenyon cells and glial cells (at protein level).

Its subcellular location is the cytoplasm. It is found in the cytoplasmic ribonucleoprotein granule. The protein localises to the P-body. It localises to the endoplasmic reticulum. The protein resides in the cell projection. Its subcellular location is the dendrite. It carries out the reaction ATP + H2O = ADP + phosphate + H(+). ATP-dependent RNA helicase which is a core component of a variety of ribonucleoprotein complexes (RNPs) that play critical roles in translational repression and mRNA decapping during embryogenesis, oogenesis, neurogenesis and neurotransmission. Recruits core components and translational repressors to some RNP complexes, and mediates RNP aggregation into processing granules such as P-bodies. As part of a RNP complex containing tral, eIF4E1, cup, and pAbp, involved in RNP-mediated translational repression of maternal mRNAs during oogenesis and embryogenesis. As part of a RNP complex containing tral and the RNA localization factors exu and yps, mediates translational silencing of mRNAs such as osk/oskar and bcd/bicoid during their transport to the oocyte in order to prevent their translation until they reach their positional destinations. In neurons and possibly imaginal disks, involved in miRNA-mediated translational repression, possibly in association with components of the piRNA transposon silencing pathway. Involved in RNA localization and protein trafficking in the oocyte. As part of an ER-associated RNP containing tral, cup and yps, required for tral-dependent ER exit site formation and consequently efficient trafficking of proteins such as grk and yl through the secretory pathway. Component of neuron RNPs that mediate transport and translation of neuronal RNAs, including translation repression of synaptic transcripts in preparation for their dendritic targeting. As part of the Atx2-Not1 repressor complex promotes Not1-dependent post-transcriptional gene silencing in adult circadian pacemaker neurons in order to sustain high-amplitude circadian rhythms and Pdf cycling in a per-independent manner. Promotes the interaction between Atx2 and Not1 within the Atx2-Not1 RNP complex. Recruited to the 4EHP-GYF2 complex by Gyf, where it plays a role in 4EHP-GYF2 mediated translational repression and mRNA decay. The polypeptide is ATP-dependent RNA helicase me31b (me31B) (Drosophila melanogaster (Fruit fly)).